A 298-amino-acid chain; its full sequence is GTPase Era (298 aa).

In terms of domain architecture, Era-type G spans 3-170 (KSGFVAILGR…IKLLTDNLEE (168 aa)). A G1 region spans residues 11–18 (GRPNVGKS). 11-18 (GRPNVGKS) serves as a coordination point for GTP. A G2 region spans residues 37–41 (QTTRN). The G3 stretch occupies residues 58 to 61 (DTPG). GTP-binding positions include 58-62 (DTPGI) and 120-123 (NKID). Positions 120 to 123 (NKID) are G4. A G5 region spans residues 149–151 (ISA). In terms of domain architecture, KH type-2 spans 201 to 279 (TQQEVPHSVA…YLETWVKVKK (79 aa)).

It belongs to the TRAFAC class TrmE-Era-EngA-EngB-Septin-like GTPase superfamily. Era GTPase family. Monomer.

It localises to the cytoplasm. The protein resides in the cell membrane. In terms of biological role, an essential GTPase that binds both GDP and GTP, with rapid nucleotide exchange. Plays a role in 16S rRNA processing and 30S ribosomal subunit biogenesis and possibly also in cell cycle regulation and energy metabolism. This Streptococcus pyogenes serotype M4 (strain MGAS10750) protein is GTPase Era.